The primary structure comprises 512 residues: Glutamate--tRNA ligase (512 aa).

The 'HIGH' region signature appears at 11 to 21 (PSPTGALHIGG). The 'KMSKS' region motif lies at 263–267 (KLSKR). Lys-266 contacts ATP.

This sequence belongs to the class-I aminoacyl-tRNA synthetase family. Glutamate--tRNA ligase type 1 subfamily. In terms of assembly, monomer.

The protein resides in the cytoplasm. It catalyses the reaction tRNA(Glu) + L-glutamate + ATP = L-glutamyl-tRNA(Glu) + AMP + diphosphate. Functionally, catalyzes the attachment of glutamate to tRNA(Glu) in a two-step reaction: glutamate is first activated by ATP to form Glu-AMP and then transferred to the acceptor end of tRNA(Glu). This is Glutamate--tRNA ligase from Amoebophilus asiaticus (strain 5a2).